The following is a 109-amino-acid chain: Spermidine export protein MdtI (109 aa).

The next 4 helical transmembrane spans lie at 6-26 (WIHG…NVLL), 36-56 (CYGI…SQAV), 64-84 (AYAL…WVLF), and 88-108 (LNPK…MIKF).

It belongs to the drug/metabolite transporter (DMT) superfamily. Small multidrug resistance (SMR) (TC 2.A.7.1) family. MdtI subfamily. In terms of assembly, forms a complex with MdtJ.

Its subcellular location is the cell inner membrane. Catalyzes the excretion of spermidine. This Salmonella choleraesuis (strain SC-B67) protein is Spermidine export protein MdtI.